Here is a 477-residue protein sequence, read N- to C-terminus: MNKDQQLAHHILDAVGGIDNVDNIIHCMTRVRLKINNETQVDYPKLKNIEGVLGVIQDERLQIVVGPGTVNEVSAEMVKLSGVQLGEDIPHRSNTSNIKNQAQQNKREFQQKRKQSKMNTILKSIANIFIPLIPAFIGAGLIGGIAAVLNNFITAGTISADWVKQLVAVLNVIKDGMLAYLAIFTGFNAAKVFGATPGLGGVIGGTTLLTGITEDNPIKNVFTGEPLIAGQGGIIGVILAVWLLSIIEKKLHKIVPNAIDIIVTPTISLLIIGLLTIFFFMPIAGFISDGLVGVVNWVIGVGGIFSGFIIGAFFLPLVMLGLHHIFTPIHIELINQSGATYLLPIAAMAGAGQVGAALALWVRCKNNTTLRTAIKGALPVGFLGIGEPLIYGVTLPLGRPFITACLGGGIGGAVIGGIGHIGATAIGPSGISLLPLIAHQKYLGYIIGLLSAYLAGFIFTYFFGTTKEMRNLNKLGD.

The PTS EIIB type-1 domain occupies 5–87 (QQLAHHILDA…VKLSGVQLGE (83 aa)). The Phosphocysteine intermediate; for EIIB activity role is filled by C27. The segment at 91–113 (HRSNTSNIKNQAQQNKREFQQKR) is disordered. Positions 92-104 (RSNTSNIKNQAQQ) are enriched in polar residues. In terms of domain architecture, PTS EIIC type-1 spans 123–477 (KSIANIFIPL…EMRNLNKLGD (355 aa)). Helical transmembrane passes span 128–148 (IFIPLIPAFIGAGLIGGIAAV), 167–187 (VAVLNVIKDGMLAYLAIFTGF), 192–212 (VFGATPGLGGVIGGTTLLTGI), 227–247 (LIAGQGGIIGVILAVWLLSII), 267–287 (ISLLIIGLLTIFFFMPIAGFI), 298–318 (VIGVGGIFSGFIIGAFFLPLV), 342–362 (LLPIAAMAGAGQVGAALALWV), 377–397 (ALPVGFLGIGEPLIYGVTLPL), 401–421 (FITACLGGGIGGAVIGGIGHI), and 443–463 (LGYIIGLLSAYLAGFIFTYFF).

Its subcellular location is the cell membrane. It catalyses the reaction N-acetyl-beta-D-muramate-(1-&gt;4)-N-acetyl-D-glucosamine(out) + N(pros)-phospho-L-histidyl-[protein] = 6-phospho-N-acetyl-beta-D-muramate-(1-&gt;4)-N-acetyl-D-glucosamine(in) + L-histidyl-[protein]. It functions in the pathway cell wall biogenesis; peptidoglycan recycling. In terms of biological role, the phosphoenolpyruvate-dependent sugar phosphotransferase system (sugar PTS), a major carbohydrate active transport system, catalyzes the phosphorylation of incoming sugar substrates concomitantly with their translocation across the cell membrane. This system is involved in the uptake and phosphorylation of MurNAc-GlcNAc, the principle peptidoglycan turnover product of S.aureus, yielding cytoplasmic MurNAc 6P-GlcNAc. This chain is PTS system MurNAc-GlcNAc-specific EIIBC component, found in Staphylococcus haemolyticus (strain JCSC1435).